A 175-amino-acid polypeptide reads, in one-letter code: Large ribosomal subunit protein uL16 (175 aa).

Belongs to the universal ribosomal protein uL16 family.

The chain is Large ribosomal subunit protein uL16 from Metallosphaera sedula (strain ATCC 51363 / DSM 5348 / JCM 9185 / NBRC 15509 / TH2).